Reading from the N-terminus, the 96-residue chain is Small ribosomal subunit protein bS6 (96 aa).

This sequence belongs to the bacterial ribosomal protein bS6 family.

Functionally, binds together with bS18 to 16S ribosomal RNA. In Salinispora tropica (strain ATCC BAA-916 / DSM 44818 / JCM 13857 / NBRC 105044 / CNB-440), this protein is Small ribosomal subunit protein bS6.